A 133-amino-acid chain; its full sequence is Small ribosomal subunit protein uS8 (133 aa).

It belongs to the universal ribosomal protein uS8 family. As to quaternary structure, part of the 30S ribosomal subunit. Contacts proteins S5 and S12.

One of the primary rRNA binding proteins, it binds directly to 16S rRNA central domain where it helps coordinate assembly of the platform of the 30S subunit. This is Small ribosomal subunit protein uS8 from Deinococcus radiodurans (strain ATCC 13939 / DSM 20539 / JCM 16871 / CCUG 27074 / LMG 4051 / NBRC 15346 / NCIMB 9279 / VKM B-1422 / R1).